Here is a 309-residue protein sequence, read N- to C-terminus: MKEIKIATRKSILALWQSEHIKARIEAQHKGMKVVLEGMKTKGDVILDTPLAKIGGKGLFTKELEDSMLKGETDIAVHSLKDVPVVFPEGLRLAAICSREDTRDAMISEKFAKFSDLPHGAKVGTTSLRRKMQLLIMRPDLEIISLRGNVQTRLRKLKEGEFDAIILAMAGINRLNIKAEVAHIYTFGFDEMIPAMGQGALGIEARDEKQILDETSFLNDENAVIETTIERDFVSVLEGGCQVPIGISARLKGDEISIDAIVGLPDGSEYIKDSLKTSKDKFQSVGKELAHKFIEKGARELLKRAEEMA.

An S-(dipyrrolylmethanemethyl)cysteine modification is found at C241.

It belongs to the HMBS family. As to quaternary structure, monomer. Dipyrromethane is required as a cofactor.

The enzyme catalyses 4 porphobilinogen + H2O = hydroxymethylbilane + 4 NH4(+). It functions in the pathway porphyrin-containing compound metabolism; protoporphyrin-IX biosynthesis; coproporphyrinogen-III from 5-aminolevulinate: step 2/4. Its function is as follows. Tetrapolymerization of the monopyrrole PBG into the hydroxymethylbilane pre-uroporphyrinogen in several discrete steps. In Campylobacter concisus (strain 13826), this protein is Porphobilinogen deaminase.